The following is a 221-amino-acid chain: Flavin-dependent thymidylate synthase (221 aa).

Residues G9–Y209 form the ThyX domain. Residues S55, R78 to R80, and E86 each bind FAD. DUMP is bound by residues Q75–R78, E86–R90, and R148. The ThyX motif motif lies at R78–S88. Residues N164–R166 and N170 contribute to the FAD site. A dUMP-binding site is contributed by R175. The active-site Involved in ionization of N3 of dUMP, leading to its activation is the R175.

It belongs to the thymidylate synthase ThyX family. In terms of assembly, homotetramer. FAD is required as a cofactor.

It catalyses the reaction dUMP + (6R)-5,10-methylene-5,6,7,8-tetrahydrofolate + NADPH + H(+) = dTMP + (6S)-5,6,7,8-tetrahydrofolate + NADP(+). Its pathway is pyrimidine metabolism; dTTP biosynthesis. Its function is as follows. Catalyzes the reductive methylation of 2'-deoxyuridine-5'-monophosphate (dUMP) to 2'-deoxythymidine-5'-monophosphate (dTMP) while utilizing 5,10-methylenetetrahydrofolate (mTHF) as the methyl donor, and NADPH and FADH(2) as the reductant. The chain is Flavin-dependent thymidylate synthase from Pseudothermotoga lettingae (strain ATCC BAA-301 / DSM 14385 / NBRC 107922 / TMO) (Thermotoga lettingae).